The primary structure comprises 269 residues: Thymidylate synthase (269 aa).

Position 26 (R26) interacts with dUMP. Position 56 (H56) interacts with (6R)-5,10-methylene-5,6,7,8-tetrahydrofolate. Position 131–132 (131–132) interacts with dUMP; sequence RR. C151 functions as the Nucleophile in the catalytic mechanism. DUMP-binding positions include 171–174, N182, and 212–214; these read RSAD and HIY. Position 174 (D174) interacts with (6R)-5,10-methylene-5,6,7,8-tetrahydrofolate. Residue A268 participates in (6R)-5,10-methylene-5,6,7,8-tetrahydrofolate binding.

This sequence belongs to the thymidylate synthase family. Bacterial-type ThyA subfamily. Homodimer.

It is found in the cytoplasm. The enzyme catalyses dUMP + (6R)-5,10-methylene-5,6,7,8-tetrahydrofolate = 7,8-dihydrofolate + dTMP. It participates in pyrimidine metabolism; dTTP biosynthesis. Its function is as follows. Catalyzes the reductive methylation of 2'-deoxyuridine-5'-monophosphate (dUMP) to 2'-deoxythymidine-5'-monophosphate (dTMP) while utilizing 5,10-methylenetetrahydrofolate (mTHF) as the methyl donor and reductant in the reaction, yielding dihydrofolate (DHF) as a by-product. This enzymatic reaction provides an intracellular de novo source of dTMP, an essential precursor for DNA biosynthesis. The sequence is that of Thymidylate synthase from Leifsonia xyli subsp. xyli (strain CTCB07).